Consider the following 318-residue polypeptide: Basic leucine zipper (bZIP) transcription factor atfB (318 aa).

2 disordered regions span residues 79-100 (LKNT…KKLQ) and 114-164 (FNSS…EKRE). The tract at residues 160–199 (REKREKFLERNRLAASKCRQKKKEHTKLLETRFREVSSKK) is basic motif. Positions 160 to 223 (REKREKFLER…LNLKNEMLRH (64 aa)) constitute a bZIP domain. Positions 202-216 (LESEIEHLRSEVLNL) are leucine-zipper. Positions 247–304 (TPNRDLVSPMRSPEQMTASTPHGLSFGFDGPMQLPSEMGSPLDQRRDSEQSIMTESSY) are disordered.

This sequence belongs to the bZIP family. ATF subfamily.

The protein localises to the nucleus. In terms of biological role, transcription factor that acts as a key player in the regulatory circuit that integrates secondary metabolism and cellular response to oxidative stress. Regulates the genes involved in development, stress response, and secondary metabolism through direct binding to their promoters. Particularly involved in the resistance to oxidative stress in asexual conidiospores. Binds aflatoxin gene promoters carrying the cAMP-response element (CRE1) under aflatoxin-inducing conditions. This chain is Basic leucine zipper (bZIP) transcription factor atfB, found in Aspergillus parasiticus (strain ATCC 56775 / NRRL 5862 / SRRC 143 / SU-1).